Consider the following 294-residue polypeptide: Ribosomal protein L11 methyltransferase (294 aa).

Residues Thr-145, Gly-166, Asp-188, and Asn-230 each coordinate S-adenosyl-L-methionine.

The protein belongs to the methyltransferase superfamily. PrmA family.

Its subcellular location is the cytoplasm. The catalysed reaction is L-lysyl-[protein] + 3 S-adenosyl-L-methionine = N(6),N(6),N(6)-trimethyl-L-lysyl-[protein] + 3 S-adenosyl-L-homocysteine + 3 H(+). Methylates ribosomal protein L11. The sequence is that of Ribosomal protein L11 methyltransferase from Glaesserella parasuis serovar 5 (strain SH0165) (Haemophilus parasuis).